The following is a 395-amino-acid chain: F-box/LRR-repeat protein 12 (395 aa).

An F-box domain is found at 13–61; it reads TSIIHLPDDCLSFIFQRLDSVADHDSFGLTCHRWLNIQNISRRSLQFQC. LRR repeat units lie at residues 75-100, 101-126, 127-152, 154-177, 178-203, 226-250, 252-278, 279-304, 305-330, and 331-356; these read NPDVSSHHLHRLLTRFQWLEHLSLSG, CTVLNDSSLDSLRYPGARLHTLYLDC, CFGISDDGISTIASFCPNLSVVSLYR, NISDIGLETLARASLSLKCVNLSY, CPLVSDFGIKALSQACLQLESVKISN, SCQLEPKGITGIISGGGIEFLNISG, SCYIRKDGLVPIGSGIASKLRILNLRM, CRTVGDESIEAIAKGCPLLQEWNLAL, CHEVKISGWEAVGKWCRNLKKLHVNR, and CRNLCDQGLLALRCGCMNLQILYMNG.

This is F-box/LRR-repeat protein 12 (FBL12) from Arabidopsis thaliana (Mouse-ear cress).